A 313-amino-acid polypeptide reads, in one-letter code: Homeobox protein knotted-1-like 2 (313 aa).

The segment at 13 to 40 (DPSSAAASSPNPSFSPGGGGGGGVGGGE) is disordered. Over residues 14–27 (PSSAAASSPNPSFS) the composition is skewed to low complexity. Residues 28–38 (PGGGGGGGVGG) show a composition bias toward gly residues. An ELK domain is found at 205-225 (ELKNELKQGYKEKLVDIREEI). Residues 226-289 (LRKRRAGKLP…NQRKRNWHSN (64 aa)) constitute a DNA-binding region (homeobox; TALE-type). The segment at 282–313 (RKRNWHSNPASSGEKTKKKRNVTGDGGAEQSW) is disordered.

The protein belongs to the TALE/KNOX homeobox family. In terms of tissue distribution, isoform 1 is expressed in roots, leaf blades, leaf sheaths and flowers. Isoform 2 is expressed in leaf blades, leaf sheaths and flowers.

Its subcellular location is the nucleus. The protein is Homeobox protein knotted-1-like 2 (HOS58) of Oryza sativa subsp. japonica (Rice).